The primary structure comprises 227 residues: ATP synthase F(0) complex subunit a (227 aa).

6 helical membrane-spanning segments follow: residues 14–34 (FLGI…FPSP), 69–89 (WAMI…LGLL), 98–118 (QLSM…LIGM), 139–159 (IPIL…ALGV), 165–185 (LTAG…MLSI), and 189–209 (IATL…AVAM).

The protein belongs to the ATPase A chain family. In terms of assembly, component of the ATP synthase complex composed at least of ATP5F1A/subunit alpha, ATP5F1B/subunit beta, ATP5MC1/subunit c (homooctomer), MT-ATP6/subunit a, MT-ATP8/subunit 8, ATP5ME/subunit e, ATP5MF/subunit f, ATP5MG/subunit g, ATP5MK/subunit k, ATP5MJ/subunit j, ATP5F1C/subunit gamma, ATP5F1D/subunit delta, ATP5F1E/subunit epsilon, ATP5PF/subunit F6, ATP5PB/subunit b, ATP5PD/subunit d, ATP5PO/subunit OSCP. ATP synthase complex consists of a soluble F(1) head domain (subunits alpha(3) and beta(3)) - the catalytic core - and a membrane F(0) domain - the membrane proton channel (subunits c, a, 8, e, f, g, k and j). These two domains are linked by a central stalk (subunits gamma, delta, and epsilon) rotating inside the F1 region and a stationary peripheral stalk (subunits F6, b, d, and OSCP). Interacts with DNAJC30; interaction is direct.

It is found in the mitochondrion inner membrane. It catalyses the reaction H(+)(in) = H(+)(out). Functionally, subunit a, of the mitochondrial membrane ATP synthase complex (F(1)F(0) ATP synthase or Complex V) that produces ATP from ADP in the presence of a proton gradient across the membrane which is generated by electron transport complexes of the respiratory chain. ATP synthase complex consist of a soluble F(1) head domain - the catalytic core - and a membrane F(1) domain - the membrane proton channel. These two domains are linked by a central stalk rotating inside the F(1) region and a stationary peripheral stalk. During catalysis, ATP synthesis in the catalytic domain of F(1) is coupled via a rotary mechanism of the central stalk subunits to proton translocation. With the subunit c (ATP5MC1), forms the proton-conducting channel in the F(0) domain, that contains two crucial half-channels (inlet and outlet) that facilitate proton movement from the mitochondrial intermembrane space (IMS) into the matrix. Protons are taken up via the inlet half-channel and released through the outlet half-channel, following a Grotthuss mechanism. This chain is ATP synthase F(0) complex subunit a, found in Polypterus ornatipinnis (Ornate bichir).